The following is a 411-amino-acid chain: Na(+)-translocating NADH-quinone reductase subunit F (411 aa).

A helical membrane pass occupies residues 6-26 (AIGGVAMFTLIIMSFVAIILA). The 95-residue stretch at 35–129 (GDVTIHINDN…DMKIEIDPEF (95 aa)) folds into the 2Fe-2S ferredoxin-type domain. Positions 72, 78, 81, and 113 each coordinate [2Fe-2S] cluster. One can recognise an FAD-binding FR-type domain in the interval 132–273 (VQKWECEVIS…SGPYGEFFAK (142 aa)).

It belongs to the NqrF family. As to quaternary structure, composed of six subunits; NqrA, NqrB, NqrC, NqrD, NqrE and NqrF. [2Fe-2S] cluster is required as a cofactor. FAD serves as cofactor.

The protein localises to the cell inner membrane. It carries out the reaction a ubiquinone + n Na(+)(in) + NADH + H(+) = a ubiquinol + n Na(+)(out) + NAD(+). In terms of biological role, NQR complex catalyzes the reduction of ubiquinone-1 to ubiquinol by two successive reactions, coupled with the transport of Na(+) ions from the cytoplasm to the periplasm. The first step is catalyzed by NqrF, which accepts electrons from NADH and reduces ubiquinone-1 to ubisemiquinone by a one-electron transfer pathway. The polypeptide is Na(+)-translocating NADH-quinone reductase subunit F (Psychrobacter arcticus (strain DSM 17307 / VKM B-2377 / 273-4)).